Consider the following 147-residue polypeptide: Cyanate hydratase (147 aa).

Active-site residues include R88, E91, and S114.

It belongs to the cyanase family.

The catalysed reaction is cyanate + hydrogencarbonate + 3 H(+) = NH4(+) + 2 CO2. Catalyzes the reaction of cyanate with bicarbonate to produce ammonia and carbon dioxide. The sequence is that of Cyanate hydratase from Thiobacillus denitrificans (strain ATCC 25259 / T1).